The following is a 220-amino-acid chain: Protein DGCR6L (220 aa).

Residues 76–159 adopt a coiled-coil conformation; sequence KSLYNQRLRL…ADQQSTLEKA (84 aa).

Belongs to the gonadal family. Widely expressed in fetal and adult tissues. Highest expression in liver, heart and skeletal muscle. Lower levels in pancreas and placenta. Weak expression in brain.

Its subcellular location is the nucleus. May play a role in neural crest cell migration into the third and fourth pharyngeal pouches. The chain is Protein DGCR6L (DGCR6L) from Homo sapiens (Human).